The following is a 210-amino-acid chain: Rho-related GTP-binding protein RhoD (210 aa).

24-31 is a GTP binding site; the sequence is GDGGCGKT. The Effector region motif lies at 46–54; it reads YTPTVFERY. Residues 71–75 and 129–132 each bind GTP; these read DTAGQ and CKTD. Residue C207 is modified to Cysteine methyl ester. The S-geranylgeranyl cysteine moiety is linked to residue C207. Positions 208 to 210 are cleaved as a propeptide — removed in mature form; sequence VVT.

Belongs to the small GTPase superfamily. Rho family. As to quaternary structure, interacts (in GTP-bound form) with DIAPH2 isoform 3, DAPK3, FILIP1 and WHAMM. Interacts with PAK5. Interacts (independent of GTP-loaded status) with ANKFY1. As to expression, heart, placenta, liver, skeletal muscle, and pancreas and, with weaker intensity, in several other tissues.

Its subcellular location is the cell membrane. The protein localises to the early endosome. Its function is as follows. Involved in endosome dynamics. May coordinate membrane transport with the function of the cytoskeleton. Involved in the internalization and trafficking of activated tyrosine kinase receptors such as PDGFRB. Participates in the reorganization of actin cytoskeleton; the function seems to involve WHAMM and includes regulation of filopodia formation and actin filament bundling. Can modulate the effect of DAPK3 in reorganization of actin cytoskeleton and focal adhesion dissolution. This is Rho-related GTP-binding protein RhoD from Homo sapiens (Human).